The following is a 154-amino-acid chain: Ribosome maturation factor RimP (154 aa).

This sequence belongs to the RimP family.

The protein localises to the cytoplasm. Functionally, required for maturation of 30S ribosomal subunits. This Salmonella gallinarum (strain 287/91 / NCTC 13346) protein is Ribosome maturation factor RimP.